The chain runs to 77 residues: UPF0401 protein UTI89_C4989 (77 aa).

It belongs to the UPF0401 family.

This is UPF0401 protein UTI89_C4989 from Escherichia coli (strain UTI89 / UPEC).